The following is an 89-amino-acid chain: RNA-binding protein Hfq (89 aa).

The region spanning 14–73 (DPYLNALRKEKINVAIYLVNGVKLQGRVDSFDQFVVLLRSNVTQMVYKHAISTIVPARDP) is the Sm domain.

It belongs to the Hfq family. As to quaternary structure, homohexamer.

Functionally, RNA chaperone that binds small regulatory RNA (sRNAs) and mRNAs to facilitate mRNA translational regulation in response to envelope stress, environmental stress and changes in metabolite concentrations. Also binds with high specificity to tRNAs. The protein is RNA-binding protein Hfq of Hydrogenovibrio crunogenus (strain DSM 25203 / XCL-2) (Thiomicrospira crunogena).